The chain runs to 170 residues: Large ribosomal subunit protein bL17 (170 aa).

The protein belongs to the bacterial ribosomal protein bL17 family. As to quaternary structure, part of the 50S ribosomal subunit. Contacts protein L32.

This is Large ribosomal subunit protein bL17 from Azobacteroides pseudotrichonymphae genomovar. CFP2.